The following is a 179-amino-acid chain: ATP-dependent protease subunit HslV (179 aa).

Thr-7 is a catalytic residue. Na(+) is bound by residues Gly-162, Cys-165, and Thr-168.

Belongs to the peptidase T1B family. HslV subfamily. As to quaternary structure, a double ring-shaped homohexamer of HslV is capped on each side by a ring-shaped HslU homohexamer. The assembly of the HslU/HslV complex is dependent on binding of ATP.

The protein localises to the cytoplasm. The enzyme catalyses ATP-dependent cleavage of peptide bonds with broad specificity.. Its activity is regulated as follows. Allosterically activated by HslU binding. Functionally, protease subunit of a proteasome-like degradation complex believed to be a general protein degrading machinery. The chain is ATP-dependent protease subunit HslV from Bordetella pertussis (strain Tohama I / ATCC BAA-589 / NCTC 13251).